The primary structure comprises 833 residues: Urease (833 aa).

Residues 395–833 (GALDVHVHYI…LPLTKRYFVY (439 aa)) form the Urease domain. 2 residues coordinate Ni(2+): H400 and H402. Residues H402 and A433 each coordinate urea. K483 contacts Ni(2+). The residue at position 483 (K483) is an N6-carboxylysine. 2 residues coordinate urea: H485 and H512. Residues H512 and H538 each contribute to the Ni(2+) site. H586 (proton donor) is an active-site residue. Residue D626 coordinates Ni(2+). Position 629 (A629) interacts with urea.

In the C-terminal section; belongs to the metallo-dependent hydrolases superfamily. Urease alpha subunit family. In terms of assembly, homohexamer. Requires Ni(2+) as cofactor. Post-translationally, carboxylation allows a single lysine to coordinate two nickel ions.

The catalysed reaction is urea + 2 H2O + H(+) = hydrogencarbonate + 2 NH4(+). The protein operates within nitrogen metabolism; urea degradation; CO(2) and NH(3) from urea (urease route): step 1/1. The urease accessory proteins URE4, URE6 and URE7 are required for urease activity, URE7 supplying nickel for the functional urease. Functionally, plays a nutritional role via nitrogen acquisition in the environment. Contributes to the central nervous system invasion by enhancing yeast sequestration within microcapillary beds (such as within the brain) during hematogenous spread, thereby facilitating blood-to-brain invasion by C.neoformans. Affects fitness within the mammalian phagosome, promoting non-lytic exocytosis while delaying intracellular replication and thus reducing phagolysosomal membrane damage, events that could facilitate cryptococcal dissemination when transported inside macrophages. Urease activity is also associated with the regulation of key intracellular metabolic pathways, including melanin biosynthesis, polyamine biosynthesis, as well as intracellular levels of proline and reactive oxygen species. This chain is Urease, found in Cryptococcus neoformans var. neoformans serotype D (strain B-3501A) (Filobasidiella neoformans).